The sequence spans 667 residues: Probable potassium transport system protein Kup (667 aa).

12 helical membrane-spanning segments follow: residues 5 to 25 (GLLIAIGIVYGDIGTSPLYVM), 47 to 67 (ISLILWTVTLLTTVQTVIIAL), 88 to 108 (AAWLVWPALIGGAAILADGTL), 133 to 153 (VSNQTTVLVITIVILLVLFSI), 164 to 184 (AFGPIMLVWFAFLGVMGLINI), 210 to 230 (AGFAILGSIFLATTGAEALYS), 243 to 263 (SWPFVFVCLSLNYFGQGVWIL), 287 to 307 (LASIVLATLAAIIASQALITG), 336 to 356 (IYIPAVNKMLGITTIALVLFF), 367 to 387 (GLSITISMLTTTILLYEWLVL), 393 to 413 (LANLLFVIFFSTINILFMGSS), and 420 to 440 (GGYVSLLITLLIASVMVVWYF).

Belongs to the HAK/KUP transporter (TC 2.A.72) family.

Its subcellular location is the cell membrane. The enzyme catalyses K(+)(in) + H(+)(in) = K(+)(out) + H(+)(out). In terms of biological role, transport of potassium into the cell. Likely operates as a K(+):H(+) symporter. This is Probable potassium transport system protein Kup from Lactobacillus delbrueckii subsp. bulgaricus (strain ATCC 11842 / DSM 20081 / BCRC 10696 / JCM 1002 / NBRC 13953 / NCIMB 11778 / NCTC 12712 / WDCM 00102 / Lb 14).